We begin with the raw amino-acid sequence, 138 residues long: uncharacterized protein (138 aa).

This is an uncharacterized protein from Acanthamoeba polyphaga mimivirus (APMV).